The chain runs to 692 residues: Phenoloxidase subunit 2 (692 aa).

The propeptide occupies 1 to 97 (MTDRVKSLQL…PRHQEMATEV (97 aa)). 3 residues coordinate Cu cation: His-213, His-217, and His-243. Residues Asn-256, Asn-295, and Asn-309 are each glycosylated (N-linked (GlcNAc...) asparagine). Residue Glu-351 is the Proton acceptor of the active site. Residues His-366, His-370, and His-406 each coordinate Cu cation. Asn-494 carries N-linked (GlcNAc...) asparagine glycosylation. Cystine bridges form between Cys-583/Cys-628 and Cys-585/Cys-635.

The protein belongs to the tyrosinase family. In terms of assembly, heterodimer. Cu(2+) is required as a cofactor.

It is found in the secreted. It catalyses the reaction L-tyrosine + O2 = L-dopaquinone + H2O. The enzyme catalyses 2 L-dopa + O2 = 2 L-dopaquinone + 2 H2O. Functionally, copper-containing oxidase that functions in the formation of pigments such as melanins and other polyphenolic compounds. Catalyzes the rate-limiting conversions of tyrosine to DOPA, DOPA to DOPA-quinone and possibly 5,6 dihydroxyindole to indole-5'6 quinone. Binds to the surface of hemocytes and is involved in hemocyte melanization. Binds the A.niger cell wall component alpha-1,3-glucan, a fungal pathogen-associated molecular pattern (PAMP) that activates the host immune response. This is Phenoloxidase subunit 2 from Galleria mellonella (Greater wax moth).